Here is a 502-residue protein sequence, read N- to C-terminus: Mannitol 2-dehydrogenase (502 aa).

Residue Ile-35–Ala-46 coordinates NAD(+).

This sequence belongs to the mannitol dehydrogenase family. Monomer.

It carries out the reaction D-mannitol + NAD(+) = D-fructose + NADH + H(+). Catalyzes the NAD(H)-dependent interconversion of D-fructose and D-mannitol in the mannitol metabolic pathway. This chain is Mannitol 2-dehydrogenase, found in Pyricularia oryzae (strain 70-15 / ATCC MYA-4617 / FGSC 8958) (Rice blast fungus).